We begin with the raw amino-acid sequence, 1323 residues long: Nck-associated protein 5-like (1323 aa).

Disordered regions lie at residues 1 to 22 (MDQP…DSME), 113 to 142 (QIPL…TSLP), 156 to 175 (QQLR…ALDA), 204 to 238 (PATP…PWAP), 260 to 314 (PGEE…DTLL), and 341 to 714 (GATG…EQPE). A mediates interaction with CDK5RAP2 and is required for homodimerization and microtubule bundle formation region spans residues 1–135 (MDQPAGGTGK…PTSPAPNVSE (135 aa)). A coiled-coil region spans residues 22–109 (ELSTCQELLH…LQQKLQLTAN (88 aa)). Composition is skewed to pro residues over residues 162–172 (GPGPPATPPPA) and 226–236 (CGPPQPEPSPW). A compositionally biased stretch (low complexity) spans 271-298 (ASSRAPPSAQGPSSGPHCAPGSSSSSSS). The span at 353–364 (PGKPNSPDPGPP) shows a compositional bias: pro residues. A phosphoserine; by CDK1 mark is found at serine 436, serine 447, serine 466, and serine 473. Positions 480 to 483 (SRIP) match the (S/T)X(I/L)P motif 1 motif. Phosphoserine occurs at positions 489, 492, and 494. Polar residues predominate over residues 531-542 (LRPSQSTVSTAL). Serine 573 is subject to Phosphoserine; by CDK1. The segment covering 647 to 660 (RPGDPSHTPLRDRL) has biased composition (basic and acidic residues). Threonine 654 is modified (phosphothreonine). Residues 743-1136 (RVYSSHSMGA…SGTPSKNLPK (394 aa)) form a mediates interaction with beta-tubulin and is required for microtubule bundle formation region. Residue serine 760 is modified to Phosphoserine; by CDK1. 4 disordered regions span residues 778–875 (ALCP…HSAI), 892–948 (GQER…EVKT), 979–1003 (AYLS…GQAQ), and 1027–1323 (KELP…GSQG). Over residues 799–817 (KPKSPHSSPTKLPSKSPTK) the composition is skewed to low complexity. Positions 808–811 (TKLP) match the (S/T)X(I/L)P motif 2 motif. The (S/T)X(I/L)P motif 3; required for interaction with MAPRE1 signature appears at 918 to 921 (SKLP). The segment covering 925–934 (RRTEATKNKD) has biased composition (basic and acidic residues). Residues 942 to 985 (LRKEVKTEARKLEAESLNISKLMAKAEDLRRALEEEKAYLSRAR) adopt a coiled-coil conformation. Over residues 1027-1041 (KELPPKSWREPKPEY) the composition is skewed to basic and acidic residues. 2 stretches are compositionally biased toward polar residues: residues 1097-1112 (VSTT…TRTL) and 1124-1136 (HSSS…NLPK). Pro residues predominate over residues 1143–1153 (DPPPGAPPARP). At serine 1184 the chain carries Phosphoserine. 2 stretches are compositionally biased toward polar residues: residues 1225–1237 (TFPN…SSSD) and 1264–1273 (VDPSRTSTPQ). Positions 1302 to 1323 (LETSESLSDSLYDSLSSCGSQG) are enriched in low complexity.

Homodimer. Interacts with CDK5RAP2. Interacts with MAPRE1. Interacts with beta-tubulin. In terms of processing, CDK1/Cyclin B-dependent phosphorylation mediates its dissociation from centrosomes during mitosis.

Its subcellular location is the cytoplasm. It localises to the cytoskeleton. The protein localises to the microtubule organizing center. It is found in the centrosome. In terms of biological role, regulates microtubule organization and stabilization. Promotes microtubule growth and bundling formation and stabilizes microtubules by increasing intense acetylation of microtubules. Both tubulin-binding and homodimer formation are required for NCKAP5L-mediated microtubule bundle formation. The protein is Nck-associated protein 5-like (Nckap5l) of Mus musculus (Mouse).